A 264-amino-acid chain; its full sequence is 4-hydroxy-tetrahydrodipicolinate reductase (264 aa).

Position 8-13 (8-13 (GPRGKM)) interacts with NAD(+). Residue lysine 36 coordinates NADP(+). Residues 97–99 (GTT) and 123–126 (APNF) contribute to the NAD(+) site. Histidine 153 (proton donor/acceptor) is an active-site residue. Residue histidine 154 coordinates (S)-2,3,4,5-tetrahydrodipicolinate. Lysine 157 functions as the Proton donor in the catalytic mechanism. A (S)-2,3,4,5-tetrahydrodipicolinate-binding site is contributed by 163–164 (GT).

Belongs to the DapB family.

The protein localises to the cytoplasm. The enzyme catalyses (S)-2,3,4,5-tetrahydrodipicolinate + NAD(+) + H2O = (2S,4S)-4-hydroxy-2,3,4,5-tetrahydrodipicolinate + NADH + H(+). It catalyses the reaction (S)-2,3,4,5-tetrahydrodipicolinate + NADP(+) + H2O = (2S,4S)-4-hydroxy-2,3,4,5-tetrahydrodipicolinate + NADPH + H(+). It functions in the pathway amino-acid biosynthesis; L-lysine biosynthesis via DAP pathway; (S)-tetrahydrodipicolinate from L-aspartate: step 4/4. In terms of biological role, catalyzes the conversion of 4-hydroxy-tetrahydrodipicolinate (HTPA) to tetrahydrodipicolinate. The protein is 4-hydroxy-tetrahydrodipicolinate reductase of Halalkalibacterium halodurans (strain ATCC BAA-125 / DSM 18197 / FERM 7344 / JCM 9153 / C-125) (Bacillus halodurans).